A 360-amino-acid polypeptide reads, in one-letter code: Phospho-N-acetylmuramoyl-pentapeptide-transferase (360 aa).

The next 10 membrane-spanning stretches (helical) occupy residues 16 to 36 (FAVFQYLTLRGILGVLTALVL), 73 to 93 (TMGGALILSSIGVSTLLWADL), 97 to 117 (YVWVVLLVTLLFGAIGWVDDY), 134 to 154 (YFWQSVFGLGAAIFLYMTAST), 168 to 188 (YSIPLGAGFIVLTYFVIVGSS), 199 to 219 (GLAIMPTVMVGGGLGIFCYLS), 236 to 256 (AGELIVFCGALIGAGLGFLWF), 263 to 283 (VFMGDVGALALGAALGTIAVI), 288 to 308 (IVLFIMGGVFVMETLSVVIQV), and 338 to 358 (VIVRFWIITVILVLIGLATLK).

It belongs to the glycosyltransferase 4 family. MraY subfamily. The cofactor is Mg(2+).

It is found in the cell inner membrane. It carries out the reaction UDP-N-acetyl-alpha-D-muramoyl-L-alanyl-gamma-D-glutamyl-meso-2,6-diaminopimeloyl-D-alanyl-D-alanine + di-trans,octa-cis-undecaprenyl phosphate = di-trans,octa-cis-undecaprenyl diphospho-N-acetyl-alpha-D-muramoyl-L-alanyl-D-glutamyl-meso-2,6-diaminopimeloyl-D-alanyl-D-alanine + UMP. It participates in cell wall biogenesis; peptidoglycan biosynthesis. Functionally, catalyzes the initial step of the lipid cycle reactions in the biosynthesis of the cell wall peptidoglycan: transfers peptidoglycan precursor phospho-MurNAc-pentapeptide from UDP-MurNAc-pentapeptide onto the lipid carrier undecaprenyl phosphate, yielding undecaprenyl-pyrophosphoryl-MurNAc-pentapeptide, known as lipid I. The sequence is that of Phospho-N-acetylmuramoyl-pentapeptide-transferase from Pseudomonas fluorescens (strain Pf0-1).